The following is a 942-amino-acid chain: MPPRYPFGGGAQSDEAHHQPLERRTTAEAQGNSFTHGHTAYPTYDMGAEPHSPPHVSYDPYLPPSTSGDHSGYEMPSANYNDHHRSSYPQAIHSPPRMTNPYANSQPRQGSADPFDEHDGDVPLLPRGGNYAYAPASHFDEHGNHVGPVDKYADGDDDVMDEDAVNGQARGRLLHTQVPHDDDYMPGGFDPNVLENGQAGGVRFGKIPQRVPRRYKTLKRVELYHGNLVLDCPVPSKLLDKLNDRESREFTHMRYTAATCDPDEFKTERYTLRQVLFDPPRRTELFIVLTMYNEDEELFTRTMHGVMTNIAHLCTRERSKTWGKEGWKKVVVCIVSDGRLKINSRTLACLAAMGVYQEGVGKNVVNGKPVTAHIYEYTAQLSIDPSMHFKGREKGIMPVQILFCLKERNQKKINSHRWFFNAFGQILQPNICVLLDVGTMPRPRSIYHLWKAFDINSNVGGACGEIVALKGKFWGALLNPLVAAQNFEYKMSNILDKPLESVFGYITVLPGAFSAYRYIALQNDAHGQGPLCSYFKGETLHGGQSDADVFTSNMYLAEDRILCWELVSKRDSAWILHYVKSAQAVTDVPDQVPELISQRRRWLNGSFFAGIHSIIKFGYIYRSSHSFGRKFALHIEIIYQTIQLIFSWFGMANFFIAFFILTSAMSDKIHALKVPNLVLSYIYVAFIIFCFLLSMGNRPAGSKAGYTLAMVVFALLTVYMTGAAIYLAVDSILNATGPNGGGTDALVSNRTFVNIVISLAATFGIWLIASIMFLEPMHMVTSIVQYLLMAPTFVNVISIYAFANINDISWGTKGSDKVMTDLGVVGGSGNNQVEVAIPTESKDINDAYDDAIHVLSNKAPKAGPGPVDKEQKQKDYYATVRTNVVLCWSLSNAALVVGILNISSIGTRTIYMGFLLYSVAGLALFRMMGSTIYLIKRLFSGE.

The interval 1–124 (MPPRYPFGGG…FDEHDGDVPL (124 aa)) is disordered. A compositionally biased stretch (basic and acidic residues) spans 14–26 (DEAHHQPLERRTT). Over residues 27–36 (AEAQGNSFTH) the composition is skewed to polar residues. An N-linked (GlcNAc...) asparagine glycan is attached at Asn604. Helical transmembrane passes span 641–661 (TIQLIFSWFGMANFFIAFFIL), 674–694 (VPNLVLSYIYVAFIIFCFLLS), 709–729 (AMVVFALLTVYMTGAAIYLAV), 755–775 (IVISLAATFGIWLIASIMFLE), 783–803 (IVQYLLMAPTFVNVISIYAFA), 885–905 (VLCWSLSNAALVVGILNISSI), and 909–929 (TIYMGFLLYSVAGLALFRMMG).

The protein belongs to the chitin synthase family. Class I subfamily.

The protein localises to the cell membrane. It localises to the cytoplasmic vesicle membrane. It carries out the reaction [(1-&gt;4)-N-acetyl-beta-D-glucosaminyl](n) + UDP-N-acetyl-alpha-D-glucosamine = [(1-&gt;4)-N-acetyl-beta-D-glucosaminyl](n+1) + UDP + H(+). In terms of biological role, polymerizes chitin, a structural polymer of the cell wall and septum, by transferring the sugar moiety of UDP-GlcNAc to the non-reducing end of the growing chitin polymer. The polypeptide is Chitin synthase 4 (Mycosarcoma maydis (Corn smut fungus)).